The primary structure comprises 360 residues: Phospho-N-acetylmuramoyl-pentapeptide-transferase (360 aa).

The Periplasmic portion of the chain corresponds to 1-25 (MLVWLAEHLVKYYSGFNVFSYLTFR). Residues 26–46 (AIVSLLTALFISLWMGPRMIA) form a helical membrane-spanning segment. The Cytoplasmic segment spans residues 47 to 71 (RLQKLSFGQVVRNDGPESHFSKRGT). Residues 72-92 (PTMGGIMILTAIVISVLLWAY) traverse the membrane as a helical segment. Position 93 (P93) is a topological domain, periplasmic. Residues 94–114 (SNPYVWCVLVVLIGYGIIGFV) traverse the membrane as a helical segment. At 115–131 (DDYRKVVRKDTKGLIAR) the chain is on the cytoplasmic side. A helical membrane pass occupies residues 132–152 (WKYFWMSVIALGVAFALYLVG). Residues 153 to 167 (KDTPATQLVVPFFKD) are Periplasmic-facing. The chain crosses the membrane as a helical span at residues 168 to 188 (VMPQLGLFYILLSYFVIVGTG). Residues 189-198 (NAVNLTDGLD) are Cytoplasmic-facing. The helical transmembrane segment at 199 to 219 (GLAIMPTVFVAAGFALVAWAT) threads the bilayer. Topologically, residues 220 to 235 (GNMNFANYLHIPYLRH) are periplasmic. Residues 236–256 (AGELVIVCTAIVGAGLGFLWF) form a helical membrane-spanning segment. Over 257-262 (NTYPAQ) the chain is Cytoplasmic. Residues 263–283 (VFMGDVGSLALGGALGIIAVL) form a helical membrane-spanning segment. The Periplasmic portion of the chain corresponds to 284-287 (LRQE). Residues 288–308 (FLLVIMGGVFVVETLSVILQV) form a helical membrane-spanning segment. At 309–337 (GSFKLRGQRIFRMAPIHHHYELKGWPEPR) the chain is on the cytoplasmic side. The chain crosses the membrane as a helical span at residues 338-358 (VIVRFWIISLMLVLIGLATLK). At 359 to 360 (VR) the chain is on the periplasmic side.

It belongs to the glycosyltransferase 4 family. MraY subfamily. The cofactor is Mg(2+).

Its subcellular location is the cell inner membrane. It catalyses the reaction UDP-N-acetyl-alpha-D-muramoyl-L-alanyl-gamma-D-glutamyl-meso-2,6-diaminopimeloyl-D-alanyl-D-alanine + di-trans,octa-cis-undecaprenyl phosphate = di-trans,octa-cis-undecaprenyl diphospho-N-acetyl-alpha-D-muramoyl-L-alanyl-D-glutamyl-meso-2,6-diaminopimeloyl-D-alanyl-D-alanine + UMP. Its pathway is cell wall biogenesis; peptidoglycan biosynthesis. In terms of biological role, catalyzes the initial step of the lipid cycle reactions in the biosynthesis of the cell wall peptidoglycan: transfers peptidoglycan precursor phospho-MurNAc-pentapeptide from UDP-MurNAc-pentapeptide onto the lipid carrier undecaprenyl phosphate, yielding undecaprenyl-pyrophosphoryl-MurNAc-pentapeptide, known as lipid I. This chain is Phospho-N-acetylmuramoyl-pentapeptide-transferase, found in Salmonella agona (strain SL483).